A 410-amino-acid polypeptide reads, in one-letter code: Na(+)/H(+) antiporter NhaA 1/4 (410 aa).

Helical transmembrane passes span 16-36 (VGGS…NSPL), 55-75 (LNLS…FFIV), 95-115 (ALPI…FLAF), 125-145 (GGWG…LAVV), 156-176 (FLLT…AVAC), 178-198 (SGIN…FGYL), 215-235 (AWLL…ACGV), 275-295 (IALP…AGGF), 299-319 (AITW…IFGG), 340-360 (IAGI…IAEL), and 371-391 (AKGA…LLLG).

The protein belongs to the NhaA Na(+)/H(+) (TC 2.A.33) antiporter family.

Its subcellular location is the cell membrane. It catalyses the reaction Na(+)(in) + 2 H(+)(out) = Na(+)(out) + 2 H(+)(in). Functionally, na(+)/H(+) antiporter that extrudes sodium in exchange for external protons. The chain is Na(+)/H(+) antiporter NhaA 1/4 from Streptomyces coelicolor (strain ATCC BAA-471 / A3(2) / M145).